A 970-amino-acid polypeptide reads, in one-letter code: Protein bicaudal C homolog 1-B (970 aa).

Positions 1–50 (MAAQCGGYMNQSDPGSNSERSADSPLPGSEDDSPGSAAPHDPEWREERFR) are disordered. The segment covering 9–19 (MNQSDPGSNSE) has biased composition (polar residues). Residues 40 to 50 (HDPEWREERFR) show a composition bias toward basic and acidic residues. 2 consecutive KH domains span residues 130–197 (RVTL…RVRI) and 282–346 (PVST…RQYL). Residues 596-605 (EASRQSNNHS) show a composition bias toward polar residues. Disordered regions lie at residues 596 to 638 (EASR…SANT), 677 to 696 (SDSEMSPTEGPMTDKKAPGS), and 773 to 841 (RRAN…NKSA). Residues 606 to 616 (SAEEVNSKTDS) are compositionally biased toward basic and acidic residues. Polar residues-rich tracts occupy residues 783 to 810 (TMSTTYENSPMSLSRSNSREQLGNGSDS) and 819 to 831 (IDSSHNDYSSSIG). The 64-residue stretch at 869–932 (FKGSDLPELF…LLAISELNKN (64 aa)) folds into the SAM domain.

The protein belongs to the BicC family.

Putative RNA-binding protein. May be involved in regulating gene expression during embryonic development. Seems to be involved in endoderm formation. Ectopic expression results in endoderm formation in the absence of mesoderm induction. This Xenopus laevis (African clawed frog) protein is Protein bicaudal C homolog 1-B (bicc1-b).